Consider the following 166-residue polypeptide: PR-toxin biosynthesis cluster protein 10 (166 aa).

In terms of biological role, part of the gene cluster that mediates the biosynthesis of PR-toxin, a bicyclic sesquiterpene belonging to the eremophilane class and acting as a mycotoxin. The first step of the pathway is catalyzed by the aristolochene synthase which performs the cyclization of trans,trans-farnesyl diphosphate (FPP) to the bicyclic sesquiterpene aristolochene. Following the formation of aristolochene, the non-oxygenated aristolochene is converted to the trioxygenated intermediate eremofortin B, via 7-epi-neopetasone. This conversion appears to involve three enzymes, a hydroxysterol oxidase-like enzyme, the quinone-oxidase prx3 that forms the quinone-type-structure in the bicyclic nucleus of aristolochene with the C8-oxo group and the C-3 hydroxyl group, and the P450 monooxygenase prx9 that introduces the epoxide at the double bond between carbons 1 and 2. No monoxy or dioxy-intermediates have been reported to be released to the broth, so these three early oxidative reactions may be coupled together. Eremofortin B is further oxidized by another P450 monooxygenase, that introduces a second epoxide between carbons 7 and 11 prior to acetylation to eremofortin A by the acetyltransferase prx11. The second epoxidation may be performed by a second P450 monooxygenase. After the acetylation step, eremofortin A is converted to eremofortin C and then to PR-toxin. First the conversion of eremofortin A to eremofortin C proceeds by oxidation of the side chain of the molecule at C-12 and is catalyzed by the short-chain oxidoreductase prx1. The cytochrome P450 monooxygenase prx8 also plays a role in this step. The primary alcohol formed at C-12 is finally oxidized by the short-chain alcohol dehydrogenase prx4 that forms PR-toxin. This chain is PR-toxin biosynthesis cluster protein 10, found in Penicillium rubens (strain ATCC 28089 / DSM 1075 / NRRL 1951 / Wisconsin 54-1255) (Penicillium chrysogenum).